Here is a 458-residue protein sequence, read N- to C-terminus: UPF0210 protein MJ1665 (458 aa).

This sequence belongs to the UPF0210 family.

This Methanocaldococcus jannaschii (strain ATCC 43067 / DSM 2661 / JAL-1 / JCM 10045 / NBRC 100440) (Methanococcus jannaschii) protein is UPF0210 protein MJ1665.